The chain runs to 80 residues: EMBRYO SURROUNDING FACTOR 1-like protein 1 (80 aa).

The signal sequence occupies residues 1 to 22 (MKSSHIALLCIVVLSLFALHEC). 4 disulfide bridges follow: cysteine 38–cysteine 52, cysteine 43–cysteine 78, cysteine 50–cysteine 74, and cysteine 53–cysteine 64.

This sequence belongs to the MEG family. As to expression, expressed in leaves.

The protein is EMBRYO SURROUNDING FACTOR 1-like protein 1 (ESFL1) of Arabidopsis thaliana (Mouse-ear cress).